Consider the following 120-residue polypeptide: Immunogenic miracidial antigen 5D (120 aa).

Residues 41–120 (HIDVGDEDYH…PKKYGSGYKH (80 aa)) are disordered. A compositionally biased stretch (acidic residues) spans 45–66 (GDEDYHDGDDDVDYTDDVDDVD).

Belongs to the immunogenic miracidial antigen family.

The protein is Immunogenic miracidial antigen 5D (5D) of Schistosoma japonicum (Blood fluke).